Here is a 377-residue protein sequence, read N- to C-terminus: MDLKELFDLNLCLRCTGRIFAAVDTGLTNEERGARLYFAYKSIYGERDVPESCYLCNGVFKKFDEFFNILMSKLNNYEFNSILVGSTFDENIIEMEKDIQSRFGSKGESIKKEFNREFGKYLSKRLGKPFSKDADLTIEVDALYENVNIIVKPVYIYGVYIKKSRDISQTRWIHKTGESIESIIGNELRSMTGCENYYLHGSGREDVDVMMLGNGREFVIEAAMPKRRYIDLYELQLRVNASGILFIYNLSYSSKATVRRIKSELHEKLYIAEVTGDLNKDIKKACSKFNNLIIEQRTPLRVINHRSDLVRRKKINYINIISIMNGRALLKICAEAGTYIKELVNGDNGRTVPSLSSVYGSQLQVSSLDVVKIYRDD.

Residue D206 is the Nucleophile of the active site. Substrate is bound by residues Y270 and Y339.

It belongs to the pseudouridine synthase Pus10 family.

The catalysed reaction is uridine(54) in tRNA = pseudouridine(54) in tRNA. It carries out the reaction uridine(55) in tRNA = pseudouridine(55) in tRNA. In terms of biological role, responsible for synthesis of pseudouridine from uracil-54 and uracil-55 in the psi GC loop of transfer RNAs. This is tRNA pseudouridine synthase Pus10 from Picrophilus torridus (strain ATCC 700027 / DSM 9790 / JCM 10055 / NBRC 100828 / KAW 2/3).